A 336-amino-acid chain; its full sequence is MKFLDQAKIYVRSGDGGDGVIAFRREKYIEFGGPDGGDGGRGGDIIFRAVPGLNTLIDFRYTQHFKARKGGNGAGSNRTGAAAANVTINVPVGTQIFDEDRETLLADLDAEGKEVLLCRGGDGGLGNTHFKSSTNRAPRRADKGWPGEERWVWLRLKLIADIGLVGLPNAGKSTLLSVASRARPKIADYPFTTLHPQLGVVRLNNTEEFVIADIPGLIEGASEGAGLGDRFLGHVERCATLLHLIDGTESQIVKHWRLIRKELEAYDPELAAKPEIIVLNKCDSLTPTQRSAKKRALAKASGAEVMMLSGATQEGLPELLRLLQDRVTAAKRDRQG.

Positions 1–159 (MKFLDQAKIY…RWVWLRLKLI (159 aa)) constitute an Obg domain. One can recognise an OBG-type G domain in the interval 160-328 (ADIGLVGLPN…LLRLLQDRVT (169 aa)). Residues 166–173 (GLPNAGKS), 191–195 (FTTLH), 213–216 (DIPG), 280–283 (NKCD), and 309–311 (SGA) each bind GTP. Mg(2+) contacts are provided by serine 173 and threonine 193.

Belongs to the TRAFAC class OBG-HflX-like GTPase superfamily. OBG GTPase family. Monomer. Requires Mg(2+) as cofactor.

It is found in the cytoplasm. Its function is as follows. An essential GTPase which binds GTP, GDP and possibly (p)ppGpp with moderate affinity, with high nucleotide exchange rates and a fairly low GTP hydrolysis rate. Plays a role in control of the cell cycle, stress response, ribosome biogenesis and in those bacteria that undergo differentiation, in morphogenesis control. The protein is GTPase Obg of Gluconobacter oxydans (strain 621H) (Gluconobacter suboxydans).